A 431-amino-acid polypeptide reads, in one-letter code: Sulfide dehydrogenase [flavocytochrome c] flavoprotein chain (431 aa).

A signal peptide (tat-type signal) is located at residues 1-30 (MTLNRRDFIKTSGAAVAAVGILGFPHLAFG). 70 to 76 (YTCYLSN) is a binding site for FAD. A disulfide bridge links C191 with C367.

In terms of assembly, dimer of one cytochrome and one flavoprotein. In terms of processing, predicted to be exported by the Tat system. The position of the signal peptide cleavage has been experimentally proven.

It localises to the periplasm. The catalysed reaction is hydrogen sulfide + 2 Fe(III)-[cytochrome c] = sulfur + 2 Fe(II)-[cytochrome c] + H(+). This is Sulfide dehydrogenase [flavocytochrome c] flavoprotein chain (fccB) from Allochromatium vinosum (strain ATCC 17899 / DSM 180 / NBRC 103801 / NCIMB 10441 / D) (Chromatium vinosum).